The following is a 177-amino-acid chain: Large ribosomal subunit protein uL6 (177 aa).

This sequence belongs to the universal ribosomal protein uL6 family. Part of the 50S ribosomal subunit.

Functionally, this protein binds to the 23S rRNA, and is important in its secondary structure. It is located near the subunit interface in the base of the L7/L12 stalk, and near the tRNA binding site of the peptidyltransferase center. This chain is Large ribosomal subunit protein uL6, found in Rickettsia rickettsii (strain Iowa).